A 309-amino-acid polypeptide reads, in one-letter code: Neuropeptide-like 1 (309 aa).

Residues 1-28 (MQAVLQSAHSSRRLMLLLSMLLNAAIQP) form the signal peptide. Residues 29-99 (RSIIVSATDD…GEYPDYLEED (71 aa)) constitute a propeptide that is removed on maturation. A disordered region spans residues 126-147 (GQLPTAEPGEDYGDADSGEPSE). The span at 133–144 (PGEDYGDADSGE) shows a compositional bias: acidic residues. Tyr-164 bears the Tyrosine amide mark. Asn-182 carries the post-translational modification Asparagine amide.

MTYamide peptide: Expressed in the larval CNS (at protein level). NAP peptide: Expressed in the larval CNS (at protein level). IPNamide peptide: Expressed in the ventral ganglion of the third larval instar and adult brain (at protein level).

The protein resides in the secreted. In terms of biological role, acts as a ligand for the receptor-type guanylate cyclase Gyc76C. Stimulates Gyc76c-dependent cGMP production and modulates the IMD innate immune pathway in response to salt stress by inducing nuclear translocation of NF-kappa-B protein Rel which leads to increased expression of the antimicrobial peptide diptericin. Does not appear to play a role in Gyc76C-mediated wing development. This is Neuropeptide-like 1 (Nplp1) from Drosophila melanogaster (Fruit fly).